A 1120-amino-acid polypeptide reads, in one-letter code: Cluster 41 polyketide synthase (1120 aa).

One can recognise a Ketosynthase family 3 (KS3) domain in the interval 7-430 (PHDVAVVGMG…GTVSHAIIEK (424 aa)). Catalysis depends on for beta-ketoacyl synthase activity residues cysteine 178, histidine 313, and histidine 353. Residues 539-796 (VWVFSGHGAQ…TSAISAAAED (258 aa)) are malonyl-CoA:ACP transacylase (MAT) domain. Serine 625 functions as the For acyl/malonyl transferase activity in the catalytic mechanism. Residues 804–943 (IKKILSMESR…IAMQWTSWRE (140 aa)) form a ketoreductase (KR) domain region. Residues 1042–1116 (DSLSRQVREC…HIVKWLMEKT (75 aa)) enclose the Carrier domain. O-(pantetheine 4'-phosphoryl)serine is present on serine 1076.

Functionally, polyketide synthase; part of the gene cluster 41 that mediates the biosynthesis of an extracellular and diffusible metabolite that is able to stimulate colony sclerotial production. The protein is Cluster 41 polyketide synthase of Aspergillus flavus (strain ATCC 200026 / FGSC A1120 / IAM 13836 / NRRL 3357 / JCM 12722 / SRRC 167).